Here is a 331-residue protein sequence, read N- to C-terminus: Aspartate carbamoyltransferase catalytic subunit (331 aa).

2 residues coordinate carbamoyl phosphate: R66 and T67. K94 contacts L-aspartate. 3 residues coordinate carbamoyl phosphate: R116, H149, and Q152. Positions 189 and 243 each coordinate L-aspartate. Carbamoyl phosphate is bound by residues G284 and P285.

The protein belongs to the aspartate/ornithine carbamoyltransferase superfamily. ATCase family. Heterododecamer (2C3:3R2) of six catalytic PyrB chains organized as two trimers (C3), and six regulatory PyrI chains organized as three dimers (R2).

The catalysed reaction is carbamoyl phosphate + L-aspartate = N-carbamoyl-L-aspartate + phosphate + H(+). It functions in the pathway pyrimidine metabolism; UMP biosynthesis via de novo pathway; (S)-dihydroorotate from bicarbonate: step 2/3. Catalyzes the condensation of carbamoyl phosphate and aspartate to form carbamoyl aspartate and inorganic phosphate, the committed step in the de novo pyrimidine nucleotide biosynthesis pathway. The chain is Aspartate carbamoyltransferase catalytic subunit from Thermosynechococcus vestitus (strain NIES-2133 / IAM M-273 / BP-1).